Here is a 232-residue protein sequence, read N- to C-terminus: Ferric nitrobindin-like protein (232 aa).

A compositionally biased stretch (polar residues) spans 1–10 (MSENETSKTG). Residues 1–33 (MSENETSKTGGNAGVPGSGADAPSLSDSPAISG) are disordered. The GXWXGXG signature appears at 85-91 (GVWRGEG).

This sequence belongs to the nitrobindin family.

This chain is Ferric nitrobindin-like protein, found in Corynebacterium efficiens (strain DSM 44549 / YS-314 / AJ 12310 / JCM 11189 / NBRC 100395).